The sequence spans 553 residues: Transcription factor GAMYB (553 aa).

A compositionally biased stretch (basic and acidic residues) spans 1–17 (MYRVKSESDCEMIHQEQ). A disordered region spans residues 1 to 45 (MYRVKSESDCEMIHQEQMDSPVADDGSSGGSPHRGGGPPLKKGPW). The span at 27–38 (SSGGSPHRGGGP) shows a compositional bias: gly residues. HTH myb-type domains are found at residues 37–89 (GPPL…ANHL) and 90–144 (RPNL…KRCQ). DNA-binding regions (H-T-H motif) lie at residues 65 to 89 (WNAV…ANHL) and 117 to 140 (WARM…NTRI). The disordered stretch occupies residues 464–488 (PAQSTSMGSGEQVMGPKYEPGDTSP).

It is found in the nucleus. Its function is as follows. Transcriptional activator of gibberellin-dependent alpha-amylase expression in aleurone cells. Involved in pollen and floral organs development. May bind to the 5'-TAACAAA-3' box of alpha-amylase promoter. This Oryza sativa subsp. indica (Rice) protein is Transcription factor GAMYB (GAM1).